The primary structure comprises 198 residues: Uracil phosphoribosyltransferase homolog (198 aa).

It belongs to the UPRTase family.

The protein localises to the plastid. It is found in the chloroplast. The sequence is that of Uracil phosphoribosyltransferase homolog from Porphyra purpurea (Red seaweed).